The sequence spans 281 residues: Elongation factor 1-delta (281 aa).

A2 carries the N-acetylalanine modification. K17 is modified (N6-acetyllysine). Phosphoserine is present on residues S37, E40, S44, and S60. T73 bears the Phosphothreonine mark. A leucine-zipper region spans residues 80–115; that stretch reads LVVRIASLEVENQSLRGVVQELQQAISKLEARLNVL. 4 positions are modified to phosphoserine: S86, N91, L94, and S106. N6-acetyllysine is present on K107. Residue K117 is modified to N6-acetyllysine; alternate. The residue at position 117 (K117) is an N6-succinyllysine; alternate. Residues 118–172 are disordered; the sequence is SSPGHRATAPQTQHVSPMRQVEPPAKKPATPAEDDEDDDIDLFGSDNEEEDKEAA. The residue at position 119 (S119) is a Phosphoserine. At T129 the chain carries Phosphothreonine. S133 carries the phosphoserine modification. T147 carries the post-translational modification Phosphothreonine. The segment covering 149–169 has biased composition (acidic residues); that stretch reads AEDDEDDDIDLFGSDNEEEDK. A Phosphoserine; by CK2 modification is found at S162. The interval 173 to 281 is catalytic (GEF); sequence QLREERLRQY…SVDIAAFNKI (109 aa).

This sequence belongs to the EF-1-beta/EF-1-delta family. In terms of assembly, EF-1 is composed of 4 subunits: alpha, beta, delta isoform 1, and gamma. Isoform 2 interacts with HSF1 and NFE2L2. As to expression, isoform 2 is specifically expressed in brain, cerebellum and testis.

The protein resides in the nucleus. Functionally, EF-1-beta and EF-1-delta stimulate the exchange of GDP bound to EF-1-alpha to GTP, regenerating EF-1-alpha for another round of transfer of aminoacyl-tRNAs to the ribosome. Its function is as follows. Regulates induction of heat-shock-responsive genes through association with heat shock transcription factors and direct DNA-binding at heat shock promoter elements (HSE). In Homo sapiens (Human), this protein is Elongation factor 1-delta (EEF1D).